The sequence spans 262 residues: Global transcriptional regulator CodY (262 aa).

The tract at residues 1–159 (MAHLLEKTRK…ASTVVGIQLL (159 aa)) is GAF domain. Positions 207–226 (ASVIADRIGITRSVIVNALR) form a DNA-binding region, H-T-H motif.

The protein belongs to the CodY family.

It is found in the cytoplasm. Functionally, DNA-binding global transcriptional regulator which is involved in the adaptive response to starvation and acts by directly or indirectly controlling the expression of numerous genes in response to nutrient availability. During rapid exponential growth, CodY is highly active and represses genes whose products allow adaptation to nutrient depletion. The sequence is that of Global transcriptional regulator CodY from Streptococcus pneumoniae serotype 4 (strain ATCC BAA-334 / TIGR4).